A 219-amino-acid polypeptide reads, in one-letter code: Probable GTP-binding protein EngB (219 aa).

The EngB-type G domain maps to 24 to 207; that stretch reads VQPEIAFAGR…HELIESWLRP (184 aa). GTP contacts are provided by residues 32–39, 59–63, 81–84, 148–151, and 186–188; these read GRSNAGKS, GRTQH, DLPG, TKCD, and FSA. S39 and T61 together coordinate Mg(2+).

This sequence belongs to the TRAFAC class TrmE-Era-EngA-EngB-Septin-like GTPase superfamily. EngB GTPase family. Mg(2+) serves as cofactor.

Functionally, necessary for normal cell division and for the maintenance of normal septation. The chain is Probable GTP-binding protein EngB from Burkholderia cenocepacia (strain HI2424).